We begin with the raw amino-acid sequence, 332 residues long: Glycerol-3-phosphate dehydrogenase [NAD(P)+] (332 aa).

Residues tryptophan 13, lysine 34, and lysine 108 each coordinate NADPH. Sn-glycerol 3-phosphate contacts are provided by lysine 108, glycine 136, and serine 138. Alanine 140 is a binding site for NADPH. Residues lysine 191, aspartate 244, serine 254, arginine 255, and asparagine 256 each contribute to the sn-glycerol 3-phosphate site. Lysine 191 (proton acceptor) is an active-site residue. Arginine 255 is an NADPH binding site. The NADPH site is built by valine 279 and glutamate 281.

It belongs to the NAD-dependent glycerol-3-phosphate dehydrogenase family.

The protein resides in the cytoplasm. The enzyme catalyses sn-glycerol 3-phosphate + NAD(+) = dihydroxyacetone phosphate + NADH + H(+). It carries out the reaction sn-glycerol 3-phosphate + NADP(+) = dihydroxyacetone phosphate + NADPH + H(+). The protein operates within membrane lipid metabolism; glycerophospholipid metabolism. Functionally, catalyzes the reduction of the glycolytic intermediate dihydroxyacetone phosphate (DHAP) to sn-glycerol 3-phosphate (G3P), the key precursor for phospholipid synthesis. The protein is Glycerol-3-phosphate dehydrogenase [NAD(P)+] of Francisella tularensis subsp. novicida (strain U112).